The chain runs to 131 residues: Small ribosomal subunit protein uS11 (131 aa).

It belongs to the universal ribosomal protein uS11 family. Part of the 30S ribosomal subunit. Interacts with proteins S7 and S18. Binds to IF-3.

Its function is as follows. Located on the platform of the 30S subunit, it bridges several disparate RNA helices of the 16S rRNA. Forms part of the Shine-Dalgarno cleft in the 70S ribosome. This Exiguobacterium sp. (strain ATCC BAA-1283 / AT1b) protein is Small ribosomal subunit protein uS11.